Reading from the N-terminus, the 374-residue chain is Anhydro-N-acetylmuramic acid kinase (374 aa).

Gly12 to Asp19 is a binding site for ATP.

Belongs to the anhydro-N-acetylmuramic acid kinase family.

It carries out the reaction 1,6-anhydro-N-acetyl-beta-muramate + ATP + H2O = N-acetyl-D-muramate 6-phosphate + ADP + H(+). Its pathway is amino-sugar metabolism; 1,6-anhydro-N-acetylmuramate degradation. It functions in the pathway cell wall biogenesis; peptidoglycan recycling. In terms of biological role, catalyzes the specific phosphorylation of 1,6-anhydro-N-acetylmuramic acid (anhMurNAc) with the simultaneous cleavage of the 1,6-anhydro ring, generating MurNAc-6-P. Is required for the utilization of anhMurNAc either imported from the medium or derived from its own cell wall murein, and thus plays a role in cell wall recycling. The chain is Anhydro-N-acetylmuramic acid kinase from Escherichia fergusonii (strain ATCC 35469 / DSM 13698 / CCUG 18766 / IAM 14443 / JCM 21226 / LMG 7866 / NBRC 102419 / NCTC 12128 / CDC 0568-73).